The chain runs to 409 residues: Immunity-related GTPase family M protein 1 (409 aa).

Residues 75–251 (IPVSIFVTGD…PKLRDTLHKD (177 aa)) enclose the IRG-type G domain. Residues 84–91 (DSGNGMSS), 109–113 (TGVVR), and 191–193 (KLD) each bind GTP. S202 is subject to Phosphoserine. Residue 232 to 234 (SSL) participates in GTP binding. K270 participates in a covalent cross-link: Glycyl lysine isopeptide (Lys-Gly) (interchain with G-Cter in ubiquitin). The tract at residues 350-374 (KLRLMTCAIVNAFFRLLRFLPCVCC) is alpha-K amphipathic helix.

It belongs to the TRAFAC class dynamin-like GTPase superfamily. IRG family. As to quaternary structure, interacts with ULK1; promoting the coassembly of ULK1 and BECN1. Interacts with BECN1; enhancing BECN1-interacting partners and influencing the composition of the BECN1 complex. Interacts with ATG16L1. Interacts with NOD2; promoting Irgm1 'Lys-63'-linked polyubiquitination, which is required for interactions with the core autophagy factors. Interacts with STX17; promoting STX17 recruitment to autophagosomes. Interacts with ATG8 proteins (GABARAP, GABARAPL1, GABARAPL2, MAP1LC3A, MAP1LC3B and MAP1LC3C); promoting STX17 recruitment to autophagosomes. Interacts with TFEB; promoting association between TFEB and PPP3CB and TFEB dephosphorylation. Interacts with PPP3CB; promoting association between TFEB and PPP3CB and TFEB dephosphorylation. Interacts with NLRP3; preventing NLRP3 inflammasome assembly and promoting SQSTM1/p62-dependent autophagic degradation of NLRP3. Interacts with CGAS; promoting SQSTM1/p62-dependent autophagic degradation of CGAS. Interacts with RIGI/RIG-I; promoting SQSTM1/p62-dependent autophagic degradation of RIGI/RIG-I. Interacts with NOD1; promoting SQSTM1/p62-dependent autophagic degradation of RIGI/RIG-I. Interacts with NOD2; promoting SQSTM1/p62-dependent autophagic degradation of RIGI/RIG-I. Interacts with RIPK2; promoting SQSTM1/p62-dependent autophagic degradation of RIGI/RIG-I. Interacts with PIK3CA. Palmitoylated on C-terminal Cys residues. Palmitoylation, together with the alpha-K amphipathic helix, which binds phosphatidylinositol, mediate binding to membranes. Post-translationally, ubiquitinated via 'Lys-63'-linked polyubiquitination in a NOD2-dependent process. 'Lys-63'-linked polyubiquitination is required for interactions with the core autophagy factors. Ubiquitination at Lys-270 by the DCX(WDR77) complex, also named CLR4(WDR77) complex, in intestinal cells, leading to its degradation by the proteasome. In terms of tissue distribution, expressed in lung and primary macrophages.

It localises to the golgi apparatus membrane. It is found in the cell membrane. The protein resides in the cytoplasmic vesicle. Its subcellular location is the phagosome membrane. The protein localises to the autophagosome membrane. It localises to the lysosome membrane. It is found in the late endosome membrane. The protein resides in the mitochondrion membrane. Its subcellular location is the lipid droplet. The protein localises to the cell projection. It localises to the phagocytic cup. The enzyme catalyses GTP + H2O = GDP + phosphate + H(+). Its function is as follows. Immunity-related GTPase that plays important roles in innate immunity and inflammatory response. Acts as a dynamin-like protein that binds to intracellular membranes and promotes remodeling and trafficking of those membranes. Required for clearance of acute protozoan and bacterial infections by interacting with autophagy and lysosome regulatory proteins, thereby promoting the fusion of phagosomes with lysosomes for efficient degradation of cargo including microbes. Regulates selective autophagy, including xenophagy and mitophagy, both directly and indirectly. Directly regulates autophagy by acting as a molecular adapter that promotes the coassembly of the core autophagy machinery to mediate antimicrobial defense: Irgm1 (1) activates AMPK, which in turn phosphorylates ULK1 and BECN1 to induce autophagy, (2) promotes the coassembly of ULK1 and BECN1, enhancing BECN1-interacting partners and (3) influences the composition of the BECN1 complex, by competing with the negative regulators BCL2 and RUBCN, to trigger autophagy. Also activates autophagy by promoting recruitment of STX17 to autophagosomes. In collaboration with ATG8 proteins, regulate lysosomal biogenesis, a fundamental process for any autophagic pathway, by promoting TFEB dephosphorylation. Also modulates autophagy by assisting with autophagosome formation and preventing lysosomal deacidification. Regulates autophagy by affecting mitochondrial fusion and fission. Also involved in M1 macrophage activation for the production of proinflammatory cytokines. While activating autophagy, acts as a key negative regulator of the inflammatory and interferon responses both by (1) promoting mitophagy and (2) mediating autophagy-dependent degradation of effectors of the inflammatory response. Promotes degradation of damaged and IFNG/IFN-gamma-stressed mitochondria via mitophagy, preventing cytosolic release of ligands that activate inflammation. Negatively regulates interferon-signaling in hematopoietic stem cells, preserving hematopoietic stem cell number and function. Promotes expansion of activated CD4(+) T-cells by inhibiting IFNG/IFN-gamma signaling, thereby preventing Ifng-mediated cell death of CD4(+) T-cells. Acts as a suppressor of inflammation by promoting recruitment of inflammation effectors, such as CGAS, RIGI/RIG-I and NLRP3, to autophagosome membranes, leading to their SQSTM1/p62-dependent autophagic degradation. Also directly inhibits assembly of the NLRP3 inflammasome by preventing the association between NLRP3 and PYCARD. Acts as a negative regulator of antiviral innate immune response by suppressing the RIPK2-dependent pro-inflammatory response: mediates recruitment of RIPosomes, composed of RIPK2 and NOD1 or NOD2, to autophagosome membranes, promoting their SQSTM1/p62-dependent autophagic degradation. The protein is Immunity-related GTPase family M protein 1 of Mus musculus (Mouse).